A 725-amino-acid polypeptide reads, in one-letter code: MGRKVTVATCALNQWALDFEGNFQRILKSIQIAKGKGARYRLGPELEICGYGCWDHYHESDTLLHSLQVLAALLDSPVTQDIICDVGMPIMHRNVRYNCRVIFLNRKILLIRPKMALANEGNYRELRWFTPWTRSRQTEEYVLPRMLQDLTKQKTVPFGDVVLATQDTCVGSEICEELWTPRSPHIDMGLDGVEIITNASGSHHVLRKAHTRVDLVTMATSKNGGIYLLANQKGCDGDRLYYDGCAMIAMNGSIFAQGTQFSLDDVEVLTATLDLEDVRSYKAEISSRNLEATRVSPYPRVTVDFALSVSEDLLEPVSEPMEWTYHRPEEEISLGPACWLWDFLRRSKQAGFFLPLSGGVDSAASACIVYSMCCLVCDAVKSGNQQVLTDVQNLVDESSYTPQDPRELCGRLLTTCYMASENSSQETHSRATKLAQLIGSYHINLSIDTAVKAVLGIFSLMTGKLPRFSAHGGSSRENLALQNVQARIRMVLAYLFAQLSLWSRGARGSLLVLGSANVDESLLGYLTKYDCSSADINPIGGISKTDLRAFVQFCAERFQLPVLQTILSAPATAELEPLADGQVSQMDEEDMGMTYAELSIFGRLRKVAKAGPYSMFCKLLNMWRDSYTPTQVAEKVKLFFSKYSMNRHKMTTLTPAYHAENYSPDDNRFDLRPFLYNTRWPWQFLCIDNQVLQLERKASQTREEQVLEHFKEPSPIWKQLLPKDP.

The 271-residue stretch at 5–275 folds into the CN hydrolase domain; sequence VTVATCALNQ…VEVLTATLDL (271 aa). The active-site Proton acceptor; for glutaminase activity is the Glu-45. The active-site For glutaminase activity is Lys-114. The Nucleophile; for glutaminase activity role is filled by Cys-175. Residues 325–706 form a ligase region; that stretch reads YHRPEEEISL…KASQTREEQV (382 aa). 355–362 serves as a coordination point for ATP; the sequence is PLSGGVDS. The active site involves Ser-357.

The protein in the C-terminal section; belongs to the NAD synthetase family. Homohexamer. As to expression, highly expressed in small intestine, kidney, liver and testis. Weakly expressed in skeletal muscle, spleen, lung, heart and brain.

It carries out the reaction deamido-NAD(+) + L-glutamine + ATP + H2O = L-glutamate + AMP + diphosphate + NAD(+) + H(+). Its pathway is cofactor biosynthesis; NAD(+) biosynthesis; NAD(+) from deamido-NAD(+) (L-Gln route): step 1/1. In terms of biological role, catalyzes the final step of the nicotinamide adenine dinucleotide (NAD) de novo synthesis pathway, the ATP-dependent amidation of deamido-NAD using L-glutamine as a nitrogen source. The chain is Glutamine-dependent NAD(+) synthetase (Nadsyn1) from Mus musculus (Mouse).